The chain runs to 353 residues: Phosphate acyltransferase (353 aa).

The protein belongs to the PlsX family. As to quaternary structure, homodimer. Probably interacts with PlsY.

The protein localises to the cytoplasm. It catalyses the reaction a fatty acyl-[ACP] + phosphate = an acyl phosphate + holo-[ACP]. It participates in lipid metabolism; phospholipid metabolism. Its function is as follows. Catalyzes the reversible formation of acyl-phosphate (acyl-PO(4)) from acyl-[acyl-carrier-protein] (acyl-ACP). This enzyme utilizes acyl-ACP as fatty acyl donor, but not acyl-CoA. The chain is Phosphate acyltransferase from Rhodopseudomonas palustris (strain BisB5).